Consider the following 186-residue polypeptide: Elongation factor P (186 aa).

This sequence belongs to the elongation factor P family.

The protein localises to the cytoplasm. It functions in the pathway protein biosynthesis; polypeptide chain elongation. Its function is as follows. Involved in peptide bond synthesis. Stimulates efficient translation and peptide-bond synthesis on native or reconstituted 70S ribosomes in vitro. Probably functions indirectly by altering the affinity of the ribosome for aminoacyl-tRNA, thus increasing their reactivity as acceptors for peptidyl transferase. The polypeptide is Elongation factor P (Streptococcus gordonii (strain Challis / ATCC 35105 / BCRC 15272 / CH1 / DL1 / V288)).